We begin with the raw amino-acid sequence, 269 residues long: GTP cyclohydrolase FolE2 1 (269 aa).

This sequence belongs to the GTP cyclohydrolase IV family.

The enzyme catalyses GTP + H2O = 7,8-dihydroneopterin 3'-triphosphate + formate + H(+). The protein operates within cofactor biosynthesis; 7,8-dihydroneopterin triphosphate biosynthesis; 7,8-dihydroneopterin triphosphate from GTP: step 1/1. In terms of biological role, converts GTP to 7,8-dihydroneopterin triphosphate. The protein is GTP cyclohydrolase FolE2 1 of Burkholderia cenocepacia (strain HI2424).